A 185-amino-acid chain; its full sequence is AP-3 complex subunit sigma (185 aa).

It belongs to the adaptor complexes small subunit family. Adaptor protein complex 3 (AP-3) is a heterotetramer composed of 2 large adaptins (APL5 and APL6), a medium adaptin (APM3) and a small adaptin (APS3).

Its subcellular location is the golgi apparatus. It localises to the cytoplasmic vesicle membrane. Part of the AP-3 complex, an adaptor-related complex which is not clathrin-associated. The complex is associated with the Golgi region as well as more peripheral structures. It facilitates the budding of vesicles from the Golgi membrane and may be directly involved in trafficking to the vacuole. This chain is AP-3 complex subunit sigma (APS3), found in Eremothecium gossypii (strain ATCC 10895 / CBS 109.51 / FGSC 9923 / NRRL Y-1056) (Yeast).